Consider the following 288-residue polypeptide: Protease HtpX (288 aa).

2 helical membrane-spanning segments follow: residues 5 to 25 (IALFLATNLAVLILASIVMSL) and 34 to 54 (SGLLVMAGIFGFGGSFISLLL). Position 140 (H140) interacts with Zn(2+). E141 is a catalytic residue. Residue H144 coordinates Zn(2+). The next 2 membrane-spanning stretches (helical) occupy residues 155-175 (LLQGVLNTFVIVLARVVGGII) and 190-210 (FAYFIIVFVLEMVFGLFATMI). A Zn(2+)-binding site is contributed by E219.

This sequence belongs to the peptidase M48B family. Requires Zn(2+) as cofactor.

The protein localises to the cell inner membrane. This chain is Protease HtpX, found in Stenotrophomonas maltophilia (strain R551-3).